Here is a 181-residue protein sequence, read N- to C-terminus: Oligoribonuclease (181 aa).

Positions 8 to 171 constitute an Exonuclease domain; it reads LIWVDLEMTG…VDIQESIAEL (164 aa). Tyrosine 129 is a catalytic residue.

This sequence belongs to the oligoribonuclease family.

It is found in the cytoplasm. Functionally, 3'-to-5' exoribonuclease specific for small oligoribonucleotides. This is Oligoribonuclease from Shewanella loihica (strain ATCC BAA-1088 / PV-4).